The sequence spans 445 residues: 6-phosphogluconate dehydrogenase, decarboxylating (445 aa).

NADP(+) is bound by residues 1–4 (AVMG), 22–24 (NRS), 63–65 (VKA), and Asn-91. Substrate is bound by residues Asn-91 and 117–119 (SGG). Lys-172 (proton acceptor) is an active-site residue. A substrate-binding site is contributed by 175–176 (HN). Catalysis depends on Glu-179, which acts as the Proton donor. Residues Tyr-180, Lys-249, Arg-276, Arg-434, and His-440 each coordinate substrate.

This sequence belongs to the 6-phosphogluconate dehydrogenase family. Homodimer.

It carries out the reaction 6-phospho-D-gluconate + NADP(+) = D-ribulose 5-phosphate + CO2 + NADPH. The protein operates within carbohydrate degradation; pentose phosphate pathway; D-ribulose 5-phosphate from D-glucose 6-phosphate (oxidative stage): step 3/3. Catalyzes the oxidative decarboxylation of 6-phosphogluconate to ribulose 5-phosphate and CO(2), with concomitant reduction of NADP to NADPH. The chain is 6-phosphogluconate dehydrogenase, decarboxylating (gnd) from Citrobacter amalonaticus.